The primary structure comprises 204 residues: Sec-independent protein translocase protein TatB (204 aa).

Residues 1 to 21 traverse the membrane as a helical segment; the sequence is MFDIGFSELLLIFIVGLVVLG. The segment covering 154-166 has biased composition (polar residues); that stretch reads VVSSVDSIQNGQS. The disordered stretch occupies residues 154-204; it reads VVSSVDSIQNGQSDLELDAQAEVDRQLAAMMDKYAPPDDVAENPISTEKTS.

It belongs to the TatB family. As to quaternary structure, the Tat system comprises two distinct complexes: a TatABC complex, containing multiple copies of TatA, TatB and TatC subunits, and a separate TatA complex, containing only TatA subunits. Substrates initially bind to the TatABC complex, which probably triggers association of the separate TatA complex to form the active translocon.

Its subcellular location is the cell inner membrane. Its function is as follows. Part of the twin-arginine translocation (Tat) system that transports large folded proteins containing a characteristic twin-arginine motif in their signal peptide across membranes. Together with TatC, TatB is part of a receptor directly interacting with Tat signal peptides. TatB may form an oligomeric binding site that transiently accommodates folded Tat precursor proteins before their translocation. The protein is Sec-independent protein translocase protein TatB of Mannheimia succiniciproducens (strain KCTC 0769BP / MBEL55E).